The primary structure comprises 457 residues: Protein translocase subunit SecY (457 aa).

A run of 10 helical transmembrane segments spans residues 17–37, 75–95, 118–138, 162–182, 195–215, 230–250, 287–307, 326–346, 386–406, and 412–432; these read IFFT…PVPG, IALG…LVVF, TRLF…KFAL, WVFY…LMWV, ISLI…GSIF, IVSL…TVLI, VIPV…GQFL, VAYS…WTAT, LLGA…GRIL, and VSYF…LDTM.

The protein belongs to the SecY/SEC61-alpha family. In terms of assembly, component of the Sec protein translocase complex. Heterotrimer consisting of SecY, SecE and SecG subunits. The heterotrimers can form oligomers, although 1 heterotrimer is thought to be able to translocate proteins. Interacts with the ribosome. Interacts with SecDF, and other proteins may be involved. Interacts with SecA.

The protein resides in the cell inner membrane. Functionally, the central subunit of the protein translocation channel SecYEG. Consists of two halves formed by TMs 1-5 and 6-10. These two domains form a lateral gate at the front which open onto the bilayer between TMs 2 and 7, and are clamped together by SecE at the back. The channel is closed by both a pore ring composed of hydrophobic SecY resides and a short helix (helix 2A) on the extracellular side of the membrane which forms a plug. The plug probably moves laterally to allow the channel to open. The ring and the pore may move independently. This Chlamydia trachomatis serovar D (strain ATCC VR-885 / DSM 19411 / UW-3/Cx) protein is Protein translocase subunit SecY.